The primary structure comprises 245 residues: 14-3-3 protein theta (245 aa).

Methionine 1 is modified (N-acetylmethionine). Position 3 is an N6-acetyllysine (lysine 3). Lysine 49 carries the post-translational modification N6-acetyllysine; alternate. A Glycyl lysine isopeptide (Lys-Gly) (interchain with G-Cter in SUMO2); alternate cross-link involves residue lysine 49. The residue at position 68 (lysine 68) is an N6-acetyllysine. Tyrosine 82 bears the 3'-nitrotyrosine mark. Serine 92 is subject to Phosphoserine. A 3'-nitrotyrosine modification is found at tyrosine 104. Lysine 115 is modified (N6-acetyllysine). Position 232 is a phosphoserine; by CK1 (serine 232).

The protein belongs to the 14-3-3 family. As to quaternary structure, homodimer. Interacts with CDKN1B ('Thr-198' phosphorylated form); the interaction translocates CDKN1B to the cytoplasm. Interacts with SSH1. Interacts with GAB2. Interacts with RGS7 (phosphorylated form). Interacts with CDK16. Interacts with the 'Ser-241' phosphorylated form of PDPK1. Interacts with the 'Thr-369' phosphorylated form of DAPK2. Interacts with PI4KB, TBC1D22A and TBC1D22B. Interacts with SLITRK1. Interacts with RIPOR2. Interacts with INAVA; the interaction increases upon PRR (pattern recognition receptor) stimulation and is required for cellular signaling pathway activation and cytokine secretion. Interacts with MARK2, MARK3 and MARK4. Interacts with MEFV.

The protein localises to the cytoplasm. Its function is as follows. Adapter protein implicated in the regulation of a large spectrum of both general and specialized signaling pathways. Binds to a large number of partners, usually by recognition of a phosphoserine or phosphothreonine motif. Binding generally results in the modulation of the activity of the binding partner. Negatively regulates the kinase activity of PDPK1. This chain is 14-3-3 protein theta (Ywhaq), found in Mus musculus (Mouse).